The primary structure comprises 396 residues: Pectinesterase (396 aa).

A signal peptide spans 1 to 26; sequence MQSTTLYLKTAAFLGGCSLFAATALA. Thr174 contacts substrate. Asp232 (proton donor) is an active-site residue. Catalysis depends on Asp259, which acts as the Nucleophile. The substrate site is built by Arg324 and Trp326.

It belongs to the pectinesterase family.

The protein localises to the secreted. The enzyme catalyses [(1-&gt;4)-alpha-D-galacturonosyl methyl ester](n) + n H2O = [(1-&gt;4)-alpha-D-galacturonosyl](n) + n methanol + n H(+). Its pathway is glycan metabolism; pectin degradation; 2-dehydro-3-deoxy-D-gluconate from pectin: step 1/5. Involved in maceration and soft-rotting of plant tissue. The protein is Pectinesterase (pme) of Ralstonia solanacearum (Pseudomonas solanacearum).